The sequence spans 95 residues: MSFKPLHDRIAIKPIENEEKTKGGIIIPDTAKEKPMQGEIVAVGNGVLNKNGEIHPLELKVGDKVLYGKWAGTEIEIKGEKLIVMKESDVFGIIN.

Belongs to the GroES chaperonin family. In terms of assembly, heptamer of 7 subunits arranged in a ring. Interacts with the chaperonin GroEL.

It is found in the cytoplasm. Functionally, together with the chaperonin GroEL, plays an essential role in assisting protein folding. The GroEL-GroES system forms a nano-cage that allows encapsulation of the non-native substrate proteins and provides a physical environment optimized to promote and accelerate protein folding. GroES binds to the apical surface of the GroEL ring, thereby capping the opening of the GroEL channel. In Rickettsia prowazekii (strain Madrid E), this protein is Co-chaperonin GroES.